The following is a 445-amino-acid chain: 6-phosphogluconate dehydrogenase, decarboxylating (445 aa).

NADP(+) is bound by residues 1–4 (AVMG), 22–24 (NRS), 63–65 (VKA), and Asn91. Substrate contacts are provided by residues Asn91 and 117–119 (SGG). Lys172 (proton acceptor) is an active-site residue. 175 to 176 (HN) contributes to the substrate binding site. The active-site Proton donor is the Glu179. Residues Tyr180, Lys249, Arg276, Arg434, and His440 each coordinate substrate.

Belongs to the 6-phosphogluconate dehydrogenase family. Homodimer.

The catalysed reaction is 6-phospho-D-gluconate + NADP(+) = D-ribulose 5-phosphate + CO2 + NADPH. It participates in carbohydrate degradation; pentose phosphate pathway; D-ribulose 5-phosphate from D-glucose 6-phosphate (oxidative stage): step 3/3. Its function is as follows. Catalyzes the oxidative decarboxylation of 6-phosphogluconate to ribulose 5-phosphate and CO(2), with concomitant reduction of NADP to NADPH. This is 6-phosphogluconate dehydrogenase, decarboxylating (gnd) from Citrobacter amalonaticus.